The following is a 607-amino-acid chain: Siderochrome iron transporter 2 (607 aa).

A disordered region spans residues 1–46 (MGLFGSFGARNKATPQVPPGAVAKAPEGTPKGPETNDQPDMDSSRL). A run of 13 helical transmembrane segments spans residues 86–106 (VWATYAWIWVCFFLLALQSGI), 129–149 (ILSSIIGGVLKLPIAKILNLW), 152–172 (AEGFLVFVGVYTIGLIILAAC), 180–200 (AGYVLFWIGYDAIYLILDVFV), 210–230 (AFTFAFASTPFICTAFTAPLA), 242–262 (WAYGAFAIIMPVALAPLAVVF), 297–317 (IIGAFLLMAAWVLLLLPFSLA), 326–346 (SAAFIAMVIIGFCLFFAFAAW), 367–387 (LGACVMAATLYFSFYCWDLYF), 404–424 (YMTQIYNVGSCFWGVVFGLWV), 432–452 (HTCLFFGLPLMILGAGLMIHF), 459–479 (IGYVIMCQIFIAFGGGTLVIG), and 499–519 (FIGLFSSLGGAIGYAVAAAIY). Asn-538 carries N-linked (GlcNAc...) asparagine glycosylation. A helical transmembrane segment spans residues 573–593 (FGAVAATCILILGIPAIAVWK).

Belongs to the major facilitator superfamily.

The protein resides in the cell membrane. In terms of biological role, major facilitator transporter involved in ferrichrome (FC) uptake. In Aspergillus fumigatus (strain ATCC MYA-4609 / CBS 101355 / FGSC A1100 / Af293) (Neosartorya fumigata), this protein is Siderochrome iron transporter 2.